The sequence spans 589 residues: Guanylate-binding protein 2 (589 aa).

The GTPase domain (Globular) stretch occupies residues 1–309 (MASEIHMLQP…GAISSGSLPC (309 aa)). In terms of domain architecture, GB1/RHD3-type G spans 35-276 (NQPVVVVAIV…FTSYIFSYSA (242 aa)). Residues 45–52 (GLYRTGKS), 181–182 (RD), and Leu245 each bind GTP. Position 586 is a cysteine methyl ester (Cys586). Cys586 carries the S-geranylgeranyl cysteine lipid modification. Residues 587–589 (TIL) constitute a propeptide, removed in mature form.

Belongs to the TRAFAC class dynamin-like GTPase superfamily. GB1/RHD3 GTPase family. GB1 subfamily. Homodimer; homodimerization occurs upon GTP-binding and is required for the association with membranous structures. Heterodimer with other family members, including GBP1, GBP3, GBP4 and GBP5. Isoprenylation is required for proper subcellular location. In terms of tissue distribution, widely expressed.

The protein resides in the cytoplasmic vesicle membrane. It localises to the golgi apparatus membrane. Its subcellular location is the cytoplasm. It is found in the perinuclear region. It carries out the reaction GTP + H2O = GDP + phosphate + H(+). In terms of biological role, interferon (IFN)-inducible GTPase that plays important roles in innate immunity against a diverse range of bacterial, viral and protozoan pathogens. Hydrolyzes GTP to GMP in 2 consecutive cleavage reactions, but the major reaction product is GDP. Following infection, recruited to the pathogen-containing vacuoles or vacuole-escaped bacteria and acts as a positive regulator of inflammasome assembly by promoting the release of inflammasome ligands from bacteria. Acts by promoting lysis of pathogen-containing vacuoles, releasing pathogens into the cytosol. Following pathogen release in the cytosol, promotes recruitment of proteins that mediate bacterial cytolysis: this liberates ligands that are detected by inflammasomes, such as lipopolysaccharide (LPS) that activates the non-canonical CASP4/CASP11 inflammasome or double-stranded DNA (dsDNA) that activates the AIM2 inflammasome. Confers protection to the protozoan pathogen Toxoplasma gondii. Independently of its GTPase activity, acts as an inhibitor of various viruses infectivity by inhibiting FURIN-mediated maturation of viral envelope proteins. This chain is Guanylate-binding protein 2 (Gbp2), found in Rattus norvegicus (Rat).